Reading from the N-terminus, the 100-residue chain is Urease subunit gamma (100 aa).

The protein belongs to the urease gamma subunit family. As to quaternary structure, heterotrimer of UreA (gamma), UreB (beta) and UreC (alpha) subunits. Three heterotrimers associate to form the active enzyme.

The protein localises to the cytoplasm. It carries out the reaction urea + 2 H2O + H(+) = hydrogencarbonate + 2 NH4(+). It participates in nitrogen metabolism; urea degradation; CO(2) and NH(3) from urea (urease route): step 1/1. The polypeptide is Urease subunit gamma (Lachnoclostridium phytofermentans (strain ATCC 700394 / DSM 18823 / ISDg) (Clostridium phytofermentans)).